The primary structure comprises 137 residues: Large ribosomal subunit protein uL16 (137 aa).

Belongs to the universal ribosomal protein uL16 family. As to quaternary structure, part of the 50S ribosomal subunit.

Its function is as follows. Binds 23S rRNA and is also seen to make contacts with the A and possibly P site tRNAs. In Beijerinckia indica subsp. indica (strain ATCC 9039 / DSM 1715 / NCIMB 8712), this protein is Large ribosomal subunit protein uL16.